The chain runs to 256 residues: Enolase-phosphatase E1 (256 aa).

Positions 14 and 16 each coordinate Mg(2+). Substrate is bound by residues 142-143 (SS) and lysine 176. Aspartate 201 is a binding site for Mg(2+).

Belongs to the HAD-like hydrolase superfamily. MasA/MtnC family. Monomer. Mg(2+) serves as cofactor.

It localises to the cytoplasm. It is found in the nucleus. It catalyses the reaction 5-methylsulfanyl-2,3-dioxopentyl phosphate + H2O = 1,2-dihydroxy-5-(methylsulfanyl)pent-1-en-3-one + phosphate. The protein operates within amino-acid biosynthesis; L-methionine biosynthesis via salvage pathway; L-methionine from S-methyl-5-thio-alpha-D-ribose 1-phosphate: step 3/6. It functions in the pathway amino-acid biosynthesis; L-methionine biosynthesis via salvage pathway; L-methionine from S-methyl-5-thio-alpha-D-ribose 1-phosphate: step 4/6. Functionally, bifunctional enzyme that catalyzes the enolization of 2,3-diketo-5-methylthiopentyl-1-phosphate (DK-MTP-1-P) into the intermediate 2-hydroxy-3-keto-5-methylthiopentenyl-1-phosphate (HK-MTPenyl-1-P), which is then dephosphorylated to form the acireductone 1,2-dihydroxy-3-keto-5-methylthiopentene (DHK-MTPene). This Drosophila erecta (Fruit fly) protein is Enolase-phosphatase E1.